A 265-amino-acid polypeptide reads, in one-letter code: Undecaprenyl-diphosphatase (265 aa).

The next 7 helical transmembrane spans lie at 42–62 (ATTFEVAIQLGAILAVVVLYW), 82–102 (GIMLLLLTSLPASVLGLAAHS), 108–128 (LFTPSTVAIALAVGAIFMLLV), 143–163 (MSPALALGIGCFQCLALWPGF), 181–201 (GLAAEYSFIAAVPIMFAATGY), 221–241 (GFVVSFLSAWAAVKLFIALVG), and 248–264 (FAWYRLAIAPLVYYFMA).

The protein belongs to the UppP family.

The protein localises to the cell inner membrane. It carries out the reaction di-trans,octa-cis-undecaprenyl diphosphate + H2O = di-trans,octa-cis-undecaprenyl phosphate + phosphate + H(+). Catalyzes the dephosphorylation of undecaprenyl diphosphate (UPP). Confers resistance to bacitracin. The polypeptide is Undecaprenyl-diphosphatase (Nitratidesulfovibrio vulgaris (strain ATCC 29579 / DSM 644 / CCUG 34227 / NCIMB 8303 / VKM B-1760 / Hildenborough) (Desulfovibrio vulgaris)).